The primary structure comprises 337 residues: N-acetyl-gamma-glutamyl-phosphate reductase (337 aa).

Cys149 is an active-site residue.

This sequence belongs to the NAGSA dehydrogenase family. Type 1 subfamily.

The protein resides in the cytoplasm. It catalyses the reaction N-acetyl-L-glutamate 5-semialdehyde + phosphate + NADP(+) = N-acetyl-L-glutamyl 5-phosphate + NADPH + H(+). Its pathway is amino-acid biosynthesis; L-arginine biosynthesis; N(2)-acetyl-L-ornithine from L-glutamate: step 3/4. Functionally, catalyzes the NADPH-dependent reduction of N-acetyl-5-glutamyl phosphate to yield N-acetyl-L-glutamate 5-semialdehyde. This Wolinella succinogenes (strain ATCC 29543 / DSM 1740 / CCUG 13145 / JCM 31913 / LMG 7466 / NCTC 11488 / FDC 602W) (Vibrio succinogenes) protein is N-acetyl-gamma-glutamyl-phosphate reductase.